The sequence spans 337 residues: Large ribosomal subunit protein uL3 (337 aa).

The tract at residues Met1 to Arg26 is disordered.

Belongs to the universal ribosomal protein uL3 family. Part of the 50S ribosomal subunit. Forms a cluster with proteins L14 and L24e.

In terms of biological role, one of the primary rRNA binding proteins, it binds directly near the 3'-end of the 23S rRNA, where it nucleates assembly of the 50S subunit. The chain is Large ribosomal subunit protein uL3 from Methanosphaera stadtmanae (strain ATCC 43021 / DSM 3091 / JCM 11832 / MCB-3).